We begin with the raw amino-acid sequence, 455 residues long: ATP-dependent protease ATPase subunit HslU (455 aa).

Residues V23, 65-70 (GVGKTE), D266, E333, and R405 contribute to the ATP site.

It belongs to the ClpX chaperone family. HslU subfamily. As to quaternary structure, a double ring-shaped homohexamer of HslV is capped on each side by a ring-shaped HslU homohexamer. The assembly of the HslU/HslV complex is dependent on binding of ATP.

It is found in the cytoplasm. In terms of biological role, ATPase subunit of a proteasome-like degradation complex; this subunit has chaperone activity. The binding of ATP and its subsequent hydrolysis by HslU are essential for unfolding of protein substrates subsequently hydrolyzed by HslV. HslU recognizes the N-terminal part of its protein substrates and unfolds these before they are guided to HslV for hydrolysis. This Xanthomonas oryzae pv. oryzae (strain MAFF 311018) protein is ATP-dependent protease ATPase subunit HslU.